A 382-amino-acid polypeptide reads, in one-letter code: F-box protein At3g27290 (382 aa).

The F-box domain occupies 16–105 (RKLELGLGEF…VDQMLFETLS (90 aa)).

The polypeptide is F-box protein At3g27290 (Arabidopsis thaliana (Mouse-ear cress)).